We begin with the raw amino-acid sequence, 644 residues long: Threonine--tRNA ligase (644 aa).

A TGS domain is found at 1 to 61 (MINVTLPDGS…DGDAQVAIIT (61 aa)). The segment at 243-536 (DHRKLGKQME…LIESYAGKLP (294 aa)) is catalytic. Positions 336, 387, and 513 each coordinate Zn(2+).

Belongs to the class-II aminoacyl-tRNA synthetase family. In terms of assembly, homodimer. Requires Zn(2+) as cofactor.

The protein resides in the cytoplasm. It carries out the reaction tRNA(Thr) + L-threonine + ATP = L-threonyl-tRNA(Thr) + AMP + diphosphate + H(+). Catalyzes the attachment of threonine to tRNA(Thr) in a two-step reaction: L-threonine is first activated by ATP to form Thr-AMP and then transferred to the acceptor end of tRNA(Thr). Also edits incorrectly charged L-seryl-tRNA(Thr). The chain is Threonine--tRNA ligase from Maricaulis maris (strain MCS10) (Caulobacter maris).